A 566-amino-acid polypeptide reads, in one-letter code: Type 3 secretion system secretin (566 aa).

Positions 1–22 (MKKFNIKSLTLLIVLLPLIVNA) are cleaved as a signal peptide.

This sequence belongs to the bacterial secretin family. T3SS SctC subfamily. In terms of assembly, the core secretion machinery of the T3SS is composed of approximately 20 different proteins, including cytoplasmic components, a base, an export apparatus and a needle. This subunit is part of the base, which anchors the injectisome in the bacterial cell envelope. Forms a stable homooligomeric complex.

It is found in the cell outer membrane. Component of the type III secretion system (T3SS), also called injectisome, which is used to inject bacterial effector proteins into eukaryotic host cells. Forms a ring-shaped multimeric structure with an apparent central pore in the outer membrane. This is Type 3 secretion system secretin from Shigella sonnei.